A 175-amino-acid chain; its full sequence is MYQPHFWQRSIGWLCGGLLILLLGWTIAPATALAAAGVDNYVIQYLKVTDTVELPVNDRGETKTFTAVDLTRGKRLFEENCKNCHVGGSTLPNPLVSLSLKDLKGATPPRDTIASLVAFQRSPKSYDGSEESYSCRRVSEDWLTTEQLETLAAFILRAAAVAPGWGVESFPDSAP.

The signal sequence occupies residues 1-34 (MYQPHFWQRSIGWLCGGLLILLLGWTIAPATALA). Heme c contacts are provided by Cys-81, Cys-84, His-85, and Cys-135.

This sequence belongs to the cytochrome c family. PsbV subfamily. Heme c serves as cofactor.

The protein resides in the cellular thylakoid membrane. Its function is as follows. Probable low-potential cytochrome c, can partially replace cytochrome c-550 (PsbV) function. In Thermosynechococcus vestitus (strain NIES-2133 / IAM M-273 / BP-1), this protein is Cytochrome c-550-like protein.